The chain runs to 321 residues: uncharacterized protein (321 aa).

9 helical membrane-spanning segments follow: residues 12–32, 52–72, 86–106, 109–129, 136–156, 168–188, 214–234, 254–274, and 292–312; these read IGVEFIIFSVYAVFSISWAAT, LITSMIVVAKIFGASFTAFLV, ILMSSGIFLSFVDSYSGILII, LTGLGSACALVCLVPIAQQWF, FVISFNITSNLVGITLGLVLA, DSLSFYAWINLILLILWLFVG, WGMIIFYIGPILFLNSLFTFL, KEIPALANFAIIFGPYLGLFF, and IFICGFCMLFLQNLVLIQIFA.

The protein resides in the cell membrane. This is an uncharacterized protein from Campylobacter jejuni subsp. jejuni serotype O:2 (strain ATCC 700819 / NCTC 11168).